A 138-amino-acid polypeptide reads, in one-letter code: uncharacterized protein (138 aa).

The region spanning 9 to 133 is the MsrB domain; sequence EDEWKKELGP…NSASLEFHNE (125 aa). Residues C49, C52, C97, and C100 each coordinate Zn(2+). Residue C122 is the Nucleophile of the active site.

It belongs to the MsrB Met sulfoxide reductase family. Zn(2+) serves as cofactor.

Its subcellular location is the cytoplasm. It localises to the nucleus. This is an uncharacterized protein from Schizosaccharomyces pombe (strain 972 / ATCC 24843) (Fission yeast).